The following is a 179-amino-acid chain: O-acetyl-ADP-ribose deacetylase (179 aa).

In terms of domain architecture, Macro spans methionine 1–glycine 175. Substrate-binding positions include aspartate 11–isoleucine 12, asparagine 25, glycine 33–aspartate 35, and serine 122–tyrosine 126. The Proton acceptor role is filled by aspartate 35.

The protein belongs to the MacroD-type family. YmdB subfamily. In terms of assembly, homodimer. Interacts with RNase III.

The catalysed reaction is 3''-O-acetyl-ADP-D-ribose + H2O = ADP-D-ribose + acetate + H(+). It catalyses the reaction 2''-O-acetyl-ADP-D-ribose + H2O = ADP-D-ribose + acetate + H(+). Deacetylates O-acetyl-ADP ribose to yield ADP-ribose and free acetate. Down-regulates ribonuclease 3 (RNase III) activity. Acts by interacting directly with the region of the ribonuclease that is required for dimerization/activation. The sequence is that of O-acetyl-ADP-ribose deacetylase from Salmonella gallinarum (strain 287/91 / NCTC 13346).